We begin with the raw amino-acid sequence, 284 residues long: uncharacterized protein (284 aa).

Composition is skewed to low complexity over residues asparagine 110–glycine 123 and asparagine 130–asparagine 149. The segment at asparagine 110 to aspartate 176 is disordered.

It localises to the virion. This is an uncharacterized protein from Acanthamoeba polyphaga mimivirus (APMV).